Consider the following 430-residue polypeptide: MKLITILLLCSRLLPSLAQEEGAQEMDCNDETVFQAVDTALKKYNAELESGNQFLLYRVTEGTKKDGAETLYSFKYQIKEGNCSVQSGLTWQDCDFKDAEEAATGECTTTLGKKENKFSVATQICNITPGKGPKKTEEDLCVGCFQPIPMDSSDLKPVLKHAVEHFNNNTKHTHLFALTEVKSAHSQVVAGMNYKIIYSIVQTNCSKEDFPFLREDCVPLPYGDHGECRGHTYVDIHNTIAGFSQSCDLYPGDDLFSLLPKKCFGCPKNIPVDSPELKEALGHSIAQLNAQHNHLFYFKIDTVKKATSQVVAGTKYVIEFIARETNCSKQTNTELTADCETKHLGQSLNCNANVYMRPWENKVVPTVRCQALDMMISRPPGFSPFRLVQVQETKEGTTRLLNSCEYKGRLSKAGAGPAPDHQAEASTVTP.

Positions 1-18 (MKLITILLLCSRLLPSLA) are cleaved as a signal peptide. Gln-19 is subject to Pyrrolidone carboxylic acid. One can recognise a Cystatin kininogen-type 1 domain in the interval 28-131 (CNDETVFQAV…TQICNITPGK (104 aa)). Disulfide bonds link Cys-28/Cys-404, Cys-83/Cys-94, Cys-107/Cys-125, Cys-141/Cys-144, Cys-205/Cys-217, Cys-228/Cys-247, Cys-263/Cys-266, Cys-327/Cys-339, and Cys-350/Cys-369. An N-linked (GlcNAc...) asparagine glycan is attached at Asn-82. The Cystatin kininogen-type 2 domain occupies 150–253 (MDSSDLKPVL…SQSCDLYPGD (104 aa)). N-linked (GlcNAc...) asparagine glycosylation is found at Asn-168 and Asn-204. One can recognise a Cystatin kininogen-type 3 domain in the interval 272-375 (VDSPELKEAL…TVRCQALDMM (104 aa)). A glycan (N-linked (GlcNAc...) asparagine) is linked at Asn-326. The interval 410–430 (LSKAGAGPAPDHQAEASTVTP) is disordered.

As T-kinin is preceded by a Met instead of an Arg or Lys, it is not released from its precursor by either tissue or plasma kallikrein. In terms of tissue distribution, plasma.

It localises to the secreted. Its subcellular location is the extracellular space. Its function is as follows. Kininogens are plasma glycoproteins with a number of functions: (1) as precursor of the active peptide bradykinin they effect smooth muscle contraction, induction of hypotension and increase of vascular permeability. (2) They play a role in blood coagulation by helping to position optimally prekallikrein and factor XI next to factor XII. (3) They are inhibitor of thiol proteases. The polypeptide is T-kininogen 2 (Rattus norvegicus (Rat)).